Here is a 156-residue protein sequence, read N- to C-terminus: Probable chemoreceptor glutamine deamidase CheD (156 aa).

The protein belongs to the CheD family.

The enzyme catalyses L-glutaminyl-[protein] + H2O = L-glutamyl-[protein] + NH4(+). Functionally, probably deamidates glutamine residues to glutamate on methyl-accepting chemotaxis receptors (MCPs), playing an important role in chemotaxis. The sequence is that of Probable chemoreceptor glutamine deamidase CheD from Sulfurimonas denitrificans (strain ATCC 33889 / DSM 1251) (Thiomicrospira denitrificans (strain ATCC 33889 / DSM 1251)).